A 782-amino-acid chain; its full sequence is Coiled-coil alpha-helical rod protein 1 (782 aa).

2 stretches are compositionally biased toward basic and acidic residues: residues 62–74 (ERDV…EPGR) and 208–218 (ETRRAGEAKEL). Disordered regions lie at residues 62 to 82 (ERDV…WGLE) and 185 to 218 (AHKE…AKEL). 3 coiled-coil regions span residues 82–314 (EGSQ…ELTR), 344–398 (LMVQ…EVER), and 498–691 (VTDV…QQEG).

It is found in the cytoplasm. The protein localises to the nucleus. Its function is as follows. May be a regulator of keratinocyte proliferation or differentiation. This is Coiled-coil alpha-helical rod protein 1 (CCHCR1) from Gorilla gorilla gorilla (Western lowland gorilla).